The chain runs to 685 residues: Stromal interaction molecule 1 (685 aa).

Residues 1-22 form the signal peptide; the sequence is MDVCVRLALWLLWGLLLHQGQS. Residues 23–213 are Extracellular-facing; it reads LSHSHSEKAT…LLTRHNHLKD (191 aa). 2 EF-hand domains span residues 64 to 97 and 102 to 126; these read SFEAVRNIHKLMDDDANGDVDVEESDEFLREDLN and TVKHSTFHGEDKLISVEDLWKAWKS. Asp76, Asp78, Asn80, Asp82, and Glu87 together coordinate Ca(2+). Asn131 and Asn171 each carry an N-linked (GlcNAc...) asparagine glycan. The region spanning 132-200 is the SAM domain; that stretch reads WTVDEVVQWL…QLKALDTVLF (69 aa). A helical transmembrane segment spans residues 214 to 234; it reads FMLVVSIVIGVGGCWFAYIQN. The Cytoplasmic segment spans residues 235–685; it reads RYSKEHMKKM…LKIFKKPLKK (451 aa). Positions 248 to 442 form a coiled coil; it reads LEGLHRAEQS…IEILCGFQIV (195 aa). At Ser257 the chain carries Phosphoserine. An SOAR/CAD region spans residues 344-442; that stretch reads PEALQKWLQL…IEILCGFQIV (99 aa). Residues 475–483 form a contributes to fast Ca(2+)-dependent inactivation of CRAC channels region; that stretch reads DDVDDMDEE. Low complexity predominate over residues 490–499; it reads MQSPSLQSSV. A disordered region spans residues 490–542; sequence MQSPSLQSSVRQRLTEPQHGLGSQRDLTHSDSESSLHMSDRQRVAPKPPQMSR. Thr504 carries the post-translational modification Phosphothreonine. Ser512 bears the Phosphoserine mark. Residues 515–532 are compositionally biased toward basic and acidic residues; it reads DLTHSDSESSLHMSDRQR. A Phosphothreonine modification is found at Thr517. A phosphoserine mark is found at Ser519, Ser521, Ser523, Ser524, Ser567, Ser575, Ser602, Ser608, Ser618, Ser621, and Ser628. Residues 596-685 are disordered; it reads LMELSPSAPP…LKIFKKPLKK (90 aa). Over residues 608–620 the composition is skewed to low complexity; it reads SPHLDSSRSHSPS. Residues 642 to 645 carry the Microtubule tip localization signal motif; that stretch reads TRIP. Residues 655 to 666 show a composition bias toward acidic residues; it reads EEDNGSIGEETD. Ser660 is subject to Phosphoserine. At Thr665 the chain carries Phosphothreonine. The residue at position 668 (Ser668) is a Phosphoserine. Residues 670 to 685 show a composition bias toward basic residues; the sequence is GRKKFPLKIFKKPLKK. The required for generation of inwardly rectifying CRAC currents stretch occupies residues 672 to 685; sequence KKFPLKIFKKPLKK.

Monomer in the presence of Ca(2+); it oligomerizes in absence of Ca(2+). Forms homooligomers and heterooligomers with STIM2. Interacts with pore-forming subunits of CRAC channels, ORAI1, ORAI2 and ORAI3; this interaction is potentiated upon Ca(2+) store depletion. Interacts (via the transmembrane region and the SOAR/CAD domain) with SPPL3; the interaction promotes the binding of STIM1 to ORAI1. Interacts (via the SOAR/CAD domain) with ORAI1. Interacts with MAPRE1; probably required for targeting to the growing microtubule plus ends. Interacts with CRACR2A/EFCAB4B; the interaction is direct and takes place in absence of Ca(2+). Forms a complex with CRACR2A/EFCAB4B and ORAI1 at low concentration of Ca(2+), the complex dissociates at elevated Ca(2+) concentrations. Interacts with SARAF, promoting a slow inactivation of STIM1-dependent SOCE activity, possibly by facilitating the deoligomerization of STIM1. Interacts with EFHB; the interaction takes place upon Ca(2+)-store depletion and inhibits the association with SARAF. Interacts with ASPH (isoform 8). Interacts with SLC35G1; intracellular Ca(2+)-dependent. May interact with ATP1A1, ATP2A2, ATP2B1, ATP2B4, KPNB1 and XPO1; through SLC35G1. Interacts with TMEM203. Interacts with STIMATE, promoting STIM1 conformational switch. Interacts with TMEM178A. Interacts with CASQ1 (via C-terminal end and preferentially with the monomeric form); this interaction increases in response to a depletion of intracellular Ca(2+), decreases both STIM1 aggregation and clustering, interaction of STIM1 with ORAI1 and store-operated Ca(2+) entry (SOCE) activity. Interacts with ADCY8. In terms of processing, glycosylation is required for cell surface expression. Post-translationally, phosphorylated predominantly on Ser residues. Ubiquitously expressed in various human primary cells and tumor cell lines.

The protein resides in the cell membrane. The protein localises to the endoplasmic reticulum membrane. Its subcellular location is the cytoplasm. It is found in the cytoskeleton. It localises to the sarcoplasmic reticulum. Its function is as follows. Acts as a Ca(2+) sensor that gates two major inward rectifying Ca(2+) channels at the plasma membrane: Ca(2+) release-activated Ca(2+) (CRAC) channels and arachidonate-regulated Ca(2+)-selective (ARC) channels. Plays a role in mediating store-operated Ca(2+) entry (SOCE), a Ca(2+) influx following depletion of intracellular Ca(2+) stores. Upon Ca(2+) depletion, translocates from the endoplasmic reticulum to the plasma membrane where it activates CRAC channel pore-forming subunits ORA1, ORA2 and ORAI3 to generate sustained and oscillatory Ca(2+) entry. Involved in enamel formation. The protein is Stromal interaction molecule 1 (STIM1) of Homo sapiens (Human).